Consider the following 37-residue polypeptide: Large ribosomal subunit protein bL36c (37 aa).

The protein belongs to the bacterial ribosomal protein bL36 family.

It is found in the plastid. Its subcellular location is the chloroplast. This Euglena gracilis protein is Large ribosomal subunit protein bL36c (rpl36).